Here is a 561-residue protein sequence, read N- to C-terminus: DNA ligase B (561 aa).

Lys125 serves as the catalytic N6-AMP-lysine intermediate.

The protein belongs to the NAD-dependent DNA ligase family. LigB subfamily.

The enzyme catalyses NAD(+) + (deoxyribonucleotide)n-3'-hydroxyl + 5'-phospho-(deoxyribonucleotide)m = (deoxyribonucleotide)n+m + AMP + beta-nicotinamide D-nucleotide.. Its function is as follows. Catalyzes the formation of phosphodiester linkages between 5'-phosphoryl and 3'-hydroxyl groups in double-stranded DNA using NAD as a coenzyme and as the energy source for the reaction. The polypeptide is DNA ligase B (Salmonella dublin (strain CT_02021853)).